Here is a 485-residue protein sequence, read N- to C-terminus: Glutamate--tRNA ligase 1 (485 aa).

The 'HIGH' region signature appears at 9–19; it reads PSPTGHLHIGG. A 'KMSKS' region motif is present at residues 250–254; the sequence is KMSKR. K253 is a binding site for ATP.

The protein belongs to the class-I aminoacyl-tRNA synthetase family. Glutamate--tRNA ligase type 1 subfamily. In terms of assembly, monomer.

It localises to the cytoplasm. It carries out the reaction tRNA(Glu) + L-glutamate + ATP = L-glutamyl-tRNA(Glu) + AMP + diphosphate. Catalyzes the attachment of glutamate to tRNA(Glu) in a two-step reaction: glutamate is first activated by ATP to form Glu-AMP and then transferred to the acceptor end of tRNA(Glu). This is Glutamate--tRNA ligase 1 from Caldicellulosiruptor saccharolyticus (strain ATCC 43494 / DSM 8903 / Tp8T 6331).